The following is a 105-amino-acid chain: Translation initiation factor 1A 2 (105 aa).

The interval 1-22 (MRKRREGSAAPSTQEVTRVRTP) is disordered. The S1-like domain maps to 17–91 (TRVRTPRKEN…TKADVIWKYT (75 aa)).

Belongs to the eIF-1A family.

Seems to be required for maximal rate of protein biosynthesis. Enhances ribosome dissociation into subunits and stabilizes the binding of the initiator Met-tRNA(I) to 40 S ribosomal subunits. The chain is Translation initiation factor 1A 2 (eIF1A2) from Methanosarcina acetivorans (strain ATCC 35395 / DSM 2834 / JCM 12185 / C2A).